A 297-amino-acid chain; its full sequence is Phosphatidylserine decarboxylase proenzyme (297 aa).

Active-site charge relay system; for autoendoproteolytic cleavage activity residues include Asp-100, His-157, and Ser-263. The Schiff-base intermediate with substrate; via pyruvic acid; for decarboxylase activity role is filled by Ser-263. Ser-263 carries the pyruvic acid (Ser); by autocatalysis modification.

This sequence belongs to the phosphatidylserine decarboxylase family. PSD-B subfamily. Prokaryotic type I sub-subfamily. As to quaternary structure, heterodimer of a large membrane-associated beta subunit and a small pyruvoyl-containing alpha subunit. Pyruvate serves as cofactor. Is synthesized initially as an inactive proenzyme. Formation of the active enzyme involves a self-maturation process in which the active site pyruvoyl group is generated from an internal serine residue via an autocatalytic post-translational modification. Two non-identical subunits are generated from the proenzyme in this reaction, and the pyruvate is formed at the N-terminus of the alpha chain, which is derived from the carboxyl end of the proenzyme. The autoendoproteolytic cleavage occurs by a canonical serine protease mechanism, in which the side chain hydroxyl group of the serine supplies its oxygen atom to form the C-terminus of the beta chain, while the remainder of the serine residue undergoes an oxidative deamination to produce ammonia and the pyruvoyl prosthetic group on the alpha chain. During this reaction, the Ser that is part of the protease active site of the proenzyme becomes the pyruvoyl prosthetic group, which constitutes an essential element of the active site of the mature decarboxylase.

Its subcellular location is the cell membrane. It carries out the reaction a 1,2-diacyl-sn-glycero-3-phospho-L-serine + H(+) = a 1,2-diacyl-sn-glycero-3-phosphoethanolamine + CO2. It participates in phospholipid metabolism; phosphatidylethanolamine biosynthesis; phosphatidylethanolamine from CDP-diacylglycerol: step 2/2. Functionally, catalyzes the formation of phosphatidylethanolamine (PtdEtn) from phosphatidylserine (PtdSer). The polypeptide is Phosphatidylserine decarboxylase proenzyme (Actinobacillus pleuropneumoniae serotype 5b (strain L20)).